A 194-amino-acid chain; its full sequence is Histone H1.0 (194 aa).

Residue Met1 is modified to N-acetylmethionine. Positions 1–11 (MTENSTSAPAA) are enriched in low complexity. The tract at residues 1-28 (MTENSTSAPAAKPKRAKASKKSTDHPKY) is disordered. An N-acetylthreonine; in Histone H1.0, N-terminally processed modification is found at Thr2. Residues 24 to 97 (DHPKYSDMIV…GASGSFRLAK (74 aa)) enclose the H15 domain. Arg42 carries the citrulline modification. Positions 86–194 (GVGASGSFRL…SSAKRASKKK (109 aa)) are disordered. Ser104 carries the ADP-ribosylserine modification. Positions 105–194 (VAFKKTKKEV…SSAKRASKKK (90 aa)) are enriched in basic residues.

The protein belongs to the histone H1/H5 family. Post-translationally, ADP-ribosylated on Ser-104 in response to DNA damage.

Its subcellular location is the nucleus. It localises to the chromosome. Histones H1 are necessary for the condensation of nucleosome chains into higher-order structures. The histones H1.0 are found in cells that are in terminal stages of differentiation or that have low rates of cell division. This is Histone H1.0 (H1-0) from Mus musculus (Mouse).